The sequence spans 505 residues: Probable bifunctional methylthioribulose-1-phosphate dehydratase/enolase-phosphatase E1 (505 aa).

The tract at residues 1-237 (MGLDKDGISN…ALKLHQLGLD (237 aa)) is methylthioribulose-1-phosphate dehydratase. Cys-109 is a substrate binding site. Residues His-127 and His-129 each contribute to the Zn(2+) site. The active-site Proton donor/acceptor; for methylthioribulose-1-phosphate dehydratase activity is Glu-152. Zn(2+) is bound at residue His-202. The tract at residues 266-505 (FVLDIEGTTT…FRTAKSLLEL (240 aa)) is enolase-phosphatase E1. The Mg(2+) site is built by Asp-269 and Glu-271. Substrate-binding positions include 404–405 (SS) and Lys-438. Asp-464 serves as a coordination point for Mg(2+).

The protein in the N-terminal section; belongs to the aldolase class II family. MtnB subfamily. This sequence in the C-terminal section; belongs to the HAD-like hydrolase superfamily. MasA/MtnC family. The cofactor is Zn(2+). It depends on Mg(2+) as a cofactor.

It catalyses the reaction 5-(methylsulfanyl)-D-ribulose 1-phosphate = 5-methylsulfanyl-2,3-dioxopentyl phosphate + H2O. The enzyme catalyses 5-methylsulfanyl-2,3-dioxopentyl phosphate + H2O = 1,2-dihydroxy-5-(methylsulfanyl)pent-1-en-3-one + phosphate. The protein operates within amino-acid biosynthesis; L-methionine biosynthesis via salvage pathway; L-methionine from S-methyl-5-thio-alpha-D-ribose 1-phosphate: step 2/6. It functions in the pathway amino-acid biosynthesis; L-methionine biosynthesis via salvage pathway; L-methionine from S-methyl-5-thio-alpha-D-ribose 1-phosphate: step 3/6. It participates in amino-acid biosynthesis; L-methionine biosynthesis via salvage pathway; L-methionine from S-methyl-5-thio-alpha-D-ribose 1-phosphate: step 4/6. This chain is Probable bifunctional methylthioribulose-1-phosphate dehydratase/enolase-phosphatase E1, found in Physcomitrium patens (Spreading-leaved earth moss).